The sequence spans 407 residues: Phosphopentomutase (407 aa).

6 residues coordinate Mn(2+): aspartate 10, aspartate 306, histidine 311, aspartate 347, histidine 348, and histidine 359.

This sequence belongs to the phosphopentomutase family. The cofactor is Mn(2+).

It localises to the cytoplasm. It catalyses the reaction 2-deoxy-alpha-D-ribose 1-phosphate = 2-deoxy-D-ribose 5-phosphate. It carries out the reaction alpha-D-ribose 1-phosphate = D-ribose 5-phosphate. The protein operates within carbohydrate degradation; 2-deoxy-D-ribose 1-phosphate degradation; D-glyceraldehyde 3-phosphate and acetaldehyde from 2-deoxy-alpha-D-ribose 1-phosphate: step 1/2. Isomerase that catalyzes the conversion of deoxy-ribose 1-phosphate (dRib-1-P) and ribose 1-phosphate (Rib-1-P) to deoxy-ribose 5-phosphate (dRib-5-P) and ribose 5-phosphate (Rib-5-P), respectively. The protein is Phosphopentomutase of Salmonella paratyphi A (strain AKU_12601).